Here is a 221-residue protein sequence, read N- to C-terminus: Leucine rich adaptor protein 1-like (221 aa).

Residue Met1 is modified to N-acetylmethionine. The segment at 24 to 81 (LARSLRGEELAPREGAADPSGVGGSCSSSSSCSSFAPSVSSSSSSSPASGSPRRSHPS) is disordered. The span at 28–39 (LRGEELAPREGA) shows a compositional bias: basic and acidic residues. Residues 48 to 75 (SCSSSSSCSSFAPSVSSSSSSSPASGSP) show a composition bias toward low complexity.

This is Leucine rich adaptor protein 1-like (Lurap1l) from Mus musculus (Mouse).